A 132-amino-acid polypeptide reads, in one-letter code: uncharacterized protein (132 aa).

This is an uncharacterized protein from Methanocaldococcus jannaschii (strain ATCC 43067 / DSM 2661 / JAL-1 / JCM 10045 / NBRC 100440) (Methanococcus jannaschii).